The primary structure comprises 349 residues: Putative methylesterase 12, chloroplastic (349 aa).

The N-terminal 77 residues, 1–77, are a transit peptide targeting the chloroplast; sequence MGNRVICMKK…GSTSSRRGTL (77 aa). A disordered region spans residues 61 to 80; that stretch reads GSMSRRIGSTSSRRGTLSDS. S173 serves as the catalytic Acyl-ester intermediate. Catalysis depends on charge relay system residues D300 and H328.

Belongs to the AB hydrolase superfamily. Methylesterase family.

The protein resides in the plastid. Its subcellular location is the chloroplast. Functionally, putative methylesterase. This is Putative methylesterase 12, chloroplastic from Arabidopsis thaliana (Mouse-ear cress).